A 320-amino-acid chain; its full sequence is Cytochrome f (320 aa).

The N-terminal stretch at 1 to 35 (MQNRNTFSWVKEQMTRSISVSIIIYVITRTSISNA) is a signal peptide. Y36, C56, C59, and H60 together coordinate heme. Residues 286-306 (VQGLLFFLASIILAQIFLVLK) form a helical membrane-spanning segment.

The protein belongs to the cytochrome f family. The 4 large subunits of the cytochrome b6-f complex are cytochrome b6, subunit IV (17 kDa polypeptide, petD), cytochrome f and the Rieske protein, while the 4 small subunits are PetG, PetL, PetM and PetN. The complex functions as a dimer. The cofactor is heme.

It is found in the plastid. It localises to the chloroplast thylakoid membrane. Its function is as follows. Component of the cytochrome b6-f complex, which mediates electron transfer between photosystem II (PSII) and photosystem I (PSI), cyclic electron flow around PSI, and state transitions. In Chloranthus spicatus (Chulantree), this protein is Cytochrome f.